The primary structure comprises 864 residues: DNA double-strand break repair Rad50 ATPase (864 aa).

ATP-binding positions include 32–38 (NGAGKSS) and glutamine 131. Coiled coils occupy residues 176–319 (RELD…EKAI) and 376–413 (DIDK…EKNE). Positions 380–478 (VNSLEQKVEE…ELNKIEREYR (99 aa)) constitute a Zinc-hook domain. Residues cysteine 426 and cysteine 429 each contribute to the Zn(2+) site. Residues 440 to 697 (KIIKEAKSYI…DREKIINAIN (258 aa)) adopt a coiled-coil conformation.

This sequence belongs to the SMC family. RAD50 subfamily. Homodimer. Forms a heterotetramer composed of two Mre11 subunits and two Rad50 subunits. The cofactor is Zn(2+).

In terms of biological role, part of the Rad50/Mre11 complex, which is involved in the early steps of DNA double-strand break (DSB) repair. The complex may facilitate opening of the processed DNA ends to aid in the recruitment of HerA and NurA. Rad50 controls the balance between DNA end bridging and DNA resection via ATP-dependent structural rearrangements of the Rad50/Mre11 complex. This is DNA double-strand break repair Rad50 ATPase from Saccharolobus solfataricus (strain ATCC 35092 / DSM 1617 / JCM 11322 / P2) (Sulfolobus solfataricus).